A 313-amino-acid polypeptide reads, in one-letter code: DNA-directed RNA polymerase subunit alpha (313 aa).

The interval 1-227 is alpha N-terminal domain (alpha-NTD); it reads MMLDVAPPRF…DFFGLFAEGY (227 aa). An alpha C-terminal domain (alpha-CTD) region spans residues 242-313; it reads RPVITDERPI…YGYTLESGRE (72 aa).

Belongs to the RNA polymerase alpha chain family. In terms of assembly, homodimer. The RNAP catalytic core consists of 2 alpha, 1 beta, 1 beta' and 1 omega subunit. When a sigma factor is associated with the core the holoenzyme is formed, which can initiate transcription.

It carries out the reaction RNA(n) + a ribonucleoside 5'-triphosphate = RNA(n+1) + diphosphate. In terms of biological role, DNA-dependent RNA polymerase catalyzes the transcription of DNA into RNA using the four ribonucleoside triphosphates as substrates. The polypeptide is DNA-directed RNA polymerase subunit alpha (Rubrobacter xylanophilus (strain DSM 9941 / JCM 11954 / NBRC 16129 / PRD-1)).